A 50-amino-acid chain; its full sequence is Large ribosomal subunit protein bL33 (50 aa).

The protein belongs to the bacterial ribosomal protein bL33 family.

The polypeptide is Large ribosomal subunit protein bL33 (rpmG) (Aquifex aeolicus (strain VF5)).